The following is a 103-amino-acid chain: Serine protease inhibitor 4 (103 aa).

A disulfide bridge connects residues cysteine 56 and cysteine 73.

This sequence belongs to the protease inhibitor I3 (leguminous Kunitz-type inhibitor) family.

It localises to the vacuole. In terms of biological role, inhibitor of serine protease. May protect the plant by inhibiting proteases of invading organisms. This chain is Serine protease inhibitor 4, found in Solanum tuberosum (Potato).